The sequence spans 145 residues: Small ribosomal subunit protein eS19 (145 aa).

Residue Lys-23 is modified to N6-acetyllysine. Arg-67 bears the Omega-N-methylarginine mark. N6-acetyllysine is present on residues Lys-111 and Lys-115. The residue at position 143 (Lys-143) is an N6-succinyllysine.

It belongs to the eukaryotic ribosomal protein eS19 family. As to quaternary structure, component of the small ribosomal subunit. Part of the small subunit (SSU) processome, composed of more than 70 proteins and the RNA chaperone small nucleolar RNA (snoRNA) U3. Interacts with RPS19BP1.

It localises to the cytoplasm. The protein resides in the nucleus. The protein localises to the nucleolus. Functionally, component of the small ribosomal subunit. The ribosome is a large ribonucleoprotein complex responsible for the synthesis of proteins in the cell. Required for pre-rRNA processing and maturation of 40S ribosomal subunits. Part of the small subunit (SSU) processome, first precursor of the small eukaryotic ribosomal subunit. During the assembly of the SSU processome in the nucleolus, many ribosome biogenesis factors, an RNA chaperone and ribosomal proteins associate with the nascent pre-rRNA and work in concert to generate RNA folding, modifications, rearrangements and cleavage as well as targeted degradation of pre-ribosomal RNA by the RNA exosome. This Rattus norvegicus (Rat) protein is Small ribosomal subunit protein eS19 (Rps19).